The sequence spans 21 residues: Neuropeptide gamma (21 aa).

The disordered stretch occupies residues S1 to M21. Position 21 is a methionine amide (M21).

Belongs to the tachykinin family.

Its subcellular location is the secreted. Its function is as follows. Tachykinins are active peptides which excite neurons, evoke behavioral responses, and contract (directly or indirectly) many smooth muscles. Is a potent vasoconstrictor and secretagogue that plays a regulatory role in the central control of ventilation, in particular, the heart rate variability (HRV). The protein is Neuropeptide gamma of Oncorhynchus mykiss (Rainbow trout).